Reading from the N-terminus, the 714-residue chain is Cell wall protein IFF7 (714 aa).

An N-terminal signal peptide occupies residues 1 to 19 (MLFTLSILSTLLFSTSISA). An N-linked (GlcNAc...) asparagine glycan is attached at N200. The segment covering 320–330 (GPVPSQKSLPS) has biased composition (polar residues). Disordered stretches follow at residues 320 to 633 (GPVP…AADS) and 660 to 692 (PIAN…ANGS). A compositionally biased stretch (low complexity) spans 346-504 (GSSSSSSVVS…SSTPLSGDSS (159 aa)). N390, N394, N399, N421, and N473 each carry an N-linked (GlcNAc...) asparagine glycan. Residues 505–519 (QVSSLTTGTSPDTIA) show a composition bias toward polar residues. The span at 520–544 (SFQTDSTSFGFGSGSPSSGAVQSSG) shows a compositional bias: low complexity. Residues 545–558 (VTNSTPNTGDVNTQ) show a composition bias toward polar residues. Composition is skewed to low complexity over residues 559–590 (SNTA…TTTG) and 597–625 (NNNN…NTNN). 4 N-linked (GlcNAc...) asparagine glycosylation sites follow: N577, N621, N624, and N663. The span at 665–679 (SSSPSSSSSSSSSSS) shows a compositional bias: low complexity. N690 carries an N-linked (GlcNAc...) asparagine glycan. N690 is lipidated: GPI-anchor amidated asparagine. Residues 691-714 (GSSKLSIGMTFMISGFATMFALFM) constitute a propeptide, removed in mature form.

The protein belongs to the HYR1/IFF family. The GPI-anchor is attached to the protein in the endoplasmic reticulum and serves to target the protein to the cell surface. There, the glucosamine-inositol phospholipid moiety is cleaved off and the GPI-modified mannoprotein is covalently attached via its lipidless GPI glycan remnant to the 1,6-beta-glucan of the outer cell wall layer.

It is found in the secreted. It localises to the cell wall. Its subcellular location is the membrane. Its function is as follows. GPI-anchored cell wall protein involved in cell wall organization, hyphal growth, as well as in host-fungal interaction and virulence. The protein is Cell wall protein IFF7 (IFF8) of Candida albicans (strain SC5314 / ATCC MYA-2876) (Yeast).